Here is a 151-residue protein sequence, read N- to C-terminus: Aspartate carbamoyltransferase regulatory chain (151 aa).

Residues Cys107, Cys112, Cys135, and Cys138 each contribute to the Zn(2+) site.

The protein belongs to the PyrI family. Contains catalytic and regulatory chains. The cofactor is Zn(2+).

In terms of biological role, involved in allosteric regulation of aspartate carbamoyltransferase. This chain is Aspartate carbamoyltransferase regulatory chain, found in Thermococcus gammatolerans (strain DSM 15229 / JCM 11827 / EJ3).